A 454-amino-acid polypeptide reads, in one-letter code: Retinoblastoma-binding protein homolog 5 (454 aa).

WD repeat units lie at residues 23–64, 65–104, 153–192, 196–235, 248–288, and 292–330; these read LQNA…RTFS, AHCL…LLHR, SSDE…CVAW, NTVQ…HQRG, VNKA…LIKI, and NKGE…NWSA.

As to quaternary structure, component of the SET2 complex (also known as the SET1/COMPASS complex), which contains at least set-2, swd-2.1, cfp-1, rbbp-5, wdr-5.1, dpy-30 and ash-2.

It localises to the nucleus. Functionally, required for di- and trimethylation at 'Lys-4' of histone H3. Regulates left/right asymmetry of ASE sensory neurons, via its role as a component of the SET2 complex. The sequence is that of Retinoblastoma-binding protein homolog 5 (rbbp-5) from Caenorhabditis elegans.